The sequence spans 448 residues: MNSAYHPPDMSQRIPGPAYSSSAPPPIHTYQQHQHPPPPLPPPSQHHHSSHPPLPPPPSAPHPHHQHPPPPPSHSLSSHQHHGQPPHHQPQPYAPAPYQQSQPSQYPRPHPHQQHVPPPSQHDEPPPPPSSGPSPTDHQKDSEYVPPSYSKIEEGSGWKYSLDVKQQPVRARMCGFGDKDRRPITPPPCVRLVIINTETGKEVDYNTLDHAMFVLSVDLWNHDEPGTPSYQQQSLPPSRESGYGQSQGMNYGQDYPPPVQQSYGPAPSYPPSSSYGPPQQYYPRHSGYSAEPSAPPPGAPFRNGYGQDQNALTRMAVVGGQPQGMFTRNLIGSLAASAFRLEDTEGQSGIWFVLQDLSVRTEGTFRLRFSFVNVGRPGGQGTNVNQGRAPILSSCYSESFHVYSAKKFPGVCESTPLSKKFANQGIKIPIRKDANIKGEGDEEMYDQN.

Disordered stretches follow at residues 1-153 and 224-306; these read MNSA…SKIE and EPGT…NGYG. The span at 15 to 34 shows a compositional bias: low complexity; sequence PGPAYSSSAPPPIHTYQQHQ. Composition is skewed to pro residues over residues 35–44 and 52–61; these read HPPPPLPPPS and PPLPPPPSAP. Residues 96 to 107 are compositionally biased toward low complexity; the sequence is APYQQSQPSQYP. Over residues 116–132 the composition is skewed to pro residues; it reads VPPPSQHDEPPPPPSSG. Residues 155–431 enclose the Velvet domain; it reads GSGWKYSLDV…ANQGIKIPIR (277 aa). A compositionally biased stretch (low complexity) spans 260-292; it reads QQSYGPAPSYPPSSSYGPPQQYYPRHSGYSAEP.

The protein belongs to the velvet family. VelB subfamily. As to quaternary structure, component of the heterotrimeric velvet complex composed of LAE1, VE1 and VELB; VE1 acting as a bridging protein between LAE1 and VEL2. Interacts with VE1. Forms a heterodimeric complex with VOS1; the formation of the VELB-VOS1 complex is light-dependent.

It localises to the nucleus. Its subcellular location is the cytoplasm. Its function is as follows. Component of the velvet transcription factor complex that controls sexual/asexual developmental ratio in response to light, promoting sexual development in the darkness while stimulating asexual sporulation under illumination. The velvet complex acts as a global regulator for secondary metabolite gene expression. Component of the VELB-VOS1 heterodimeric complex that plays a dual role in activating genes associated with spore maturation and repressing certain development-associated genes. The VELB-VOS1 complex binds DNA through the DNA-binding domain of VOS1 that recognizes an 11-nucleotide consensus sequence 5'-CTGGCCGCGGC-3' consisting of two motifs in the promoters of key developmental regulatory genes. Controls the expression of the fumonisins gene cluster. Involved in cell wall integrity, cell surface hydrophobicity, hyphal polarity and conidiation pattern. Involved in oxidative stress resistance by positively regulating the transcription of the catalase-encoding gene CAT2. The polypeptide is Velvet complex subunit 2 (Gibberella moniliformis (strain M3125 / FGSC 7600) (Maize ear and stalk rot fungus)).